Consider the following 234-residue polypeptide: Peptidase E (234 aa).

Catalysis depends on charge relay system residues Ser120, Asp135, and His157.

The protein belongs to the peptidase S51 family.

Its subcellular location is the cytoplasm. The enzyme catalyses Dipeptidase E catalyzes the hydrolysis of dipeptides Asp-|-Xaa. It does not act on peptides with N-terminal Glu, Asn or Gln, nor does it cleave isoaspartyl peptides.. Its function is as follows. Hydrolyzes dipeptides containing N-terminal aspartate residues. May play a role in allowing the cell to use peptide aspartate to spare carbon otherwise required for the synthesis of the aspartate family of amino acids. This is Peptidase E from Salmonella gallinarum (strain 287/91 / NCTC 13346).